Reading from the N-terminus, the 559-residue chain is Cytochrome P450 86B1 (559 aa).

The chain crosses the membrane as a helical span at residues 31-51; sequence FLLRDVQILELLIAIFVFVAI. Cys488 contributes to the heme binding site.

It belongs to the cytochrome P450 family. It depends on heme as a cofactor. Expressed in roots endodermis, anthers, stigmas, stomata of young pedicels of inflorescences, the placenta region of siliques, at the level of the hilum in matures seeds, at the junction of siliques to pedicels where abscission of floral parts takes place and in nectary glands.

Its subcellular location is the endoplasmic reticulum membrane. Its function is as follows. Involved in very long chain fatty acids (VLCFA) omega-hydroxylation. Required for the synthesis of saturated VLCFA alpha, omega-bifunctional suberin monomers. The protein is Cytochrome P450 86B1 (CYP86B1) of Arabidopsis thaliana (Mouse-ear cress).